Reading from the N-terminus, the 183-residue chain is SAGA-associated factor 11 homolog (183 aa).

The segment at 98 to 119 (CSCPNCNRIVAASRFAPHLEKC) adopts an SGF11-type zinc-finger fold. The interval 140-167 (GGNYFGADEDDEDDADWSGEKRKKKIAP) is disordered. The span at 146-156 (ADEDDEDDADW) shows a compositional bias: acidic residues.

This sequence belongs to the SGF11 family. As to quaternary structure, component of some SAGA transcription coactivator-HAT complexes. Within the SAGA complex, participates in a subcomplex of SAGA called the DUB module (deubiquitination module).

It localises to the nucleus. Its function is as follows. Component of the transcription regulatory histone acetylation (HAT) complex SAGA, a multiprotein complex that activates transcription by remodeling chromatin and mediating histone acetylation and deubiquitination. Within the SAGA complex, participates in a subcomplex that specifically deubiquitinates histone H2B. The SAGA complex is recruited to specific gene promoters by activators, where it is required for transcription. The polypeptide is SAGA-associated factor 11 homolog (Culex quinquefasciatus (Southern house mosquito)).